Consider the following 186-residue polypeptide: Peptidyl-tRNA hydrolase (186 aa).

Tyrosine 13 contacts tRNA. Histidine 18 acts as the Proton acceptor in catalysis. TRNA contacts are provided by tyrosine 59, asparagine 61, and asparagine 107.

Belongs to the PTH family. As to quaternary structure, monomer.

It is found in the cytoplasm. It carries out the reaction an N-acyl-L-alpha-aminoacyl-tRNA + H2O = an N-acyl-L-amino acid + a tRNA + H(+). Its function is as follows. Hydrolyzes ribosome-free peptidyl-tRNAs (with 1 or more amino acids incorporated), which drop off the ribosome during protein synthesis, or as a result of ribosome stalling. In terms of biological role, catalyzes the release of premature peptidyl moieties from peptidyl-tRNA molecules trapped in stalled 50S ribosomal subunits, and thus maintains levels of free tRNAs and 50S ribosomes. The chain is Peptidyl-tRNA hydrolase from Thermotoga petrophila (strain ATCC BAA-488 / DSM 13995 / JCM 10881 / RKU-1).